Here is a 170-residue protein sequence, read N- to C-terminus: Peptide deformylase (170 aa).

Fe cation-binding residues include Cys-94 and His-136. The active site involves Glu-137. A Fe cation-binding site is contributed by His-140.

This sequence belongs to the polypeptide deformylase family. Requires Fe(2+) as cofactor.

It carries out the reaction N-terminal N-formyl-L-methionyl-[peptide] + H2O = N-terminal L-methionyl-[peptide] + formate. Functionally, removes the formyl group from the N-terminal Met of newly synthesized proteins. Requires at least a dipeptide for an efficient rate of reaction. N-terminal L-methionine is a prerequisite for activity but the enzyme has broad specificity at other positions. The chain is Peptide deformylase from Stenotrophomonas maltophilia (strain K279a).